The chain runs to 452 residues: 23S rRNA (uracil(1939)-C(5))-methyltransferase RlmD (452 aa).

Residues 1–25 are disordered; sequence MSKKKSNSGLRFQPAGGNRTPQVPV. In terms of domain architecture, TRAM spans 22 to 80; it reads QVPVGKKQRLDIERLAGDGRGIAFLDGRTWFVSGALAGEAVEARVLNARGKVVEARLER. C93, C99, C102, and C181 together coordinate [4Fe-4S] cluster. 6 residues coordinate S-adenosyl-L-methionine: Q285, F314, N319, E335, D362, and D383. C409 functions as the Nucleophile in the catalytic mechanism.

The protein belongs to the class I-like SAM-binding methyltransferase superfamily. RNA M5U methyltransferase family. RlmD subfamily.

It catalyses the reaction uridine(1939) in 23S rRNA + S-adenosyl-L-methionine = 5-methyluridine(1939) in 23S rRNA + S-adenosyl-L-homocysteine + H(+). Its function is as follows. Catalyzes the formation of 5-methyl-uridine at position 1939 (m5U1939) in 23S rRNA. The polypeptide is 23S rRNA (uracil(1939)-C(5))-methyltransferase RlmD (Pseudomonas putida (strain ATCC 47054 / DSM 6125 / CFBP 8728 / NCIMB 11950 / KT2440)).